Reading from the N-terminus, the 638-residue chain is 2-isopropylmalate synthase (638 aa).

Residues 72 to 346 form the Pyruvate carboxyltransferase domain; that stretch reads PRWCSVDLRD…DPQLDLSNVP (275 aa). Mg(2+) is bound by residues Asp-81, His-285, His-287, and Asn-321. Positions 488-638 are regulatory domain; the sequence is VEQSGMTAAG…SAINRSQRQR (151 aa).

Belongs to the alpha-IPM synthase/homocitrate synthase family. LeuA type 2 subfamily. Homodimer. Requires Mg(2+) as cofactor.

It is found in the cytoplasm. It carries out the reaction 3-methyl-2-oxobutanoate + acetyl-CoA + H2O = (2S)-2-isopropylmalate + CoA + H(+). Its pathway is amino-acid biosynthesis; L-leucine biosynthesis; L-leucine from 3-methyl-2-oxobutanoate: step 1/4. Functionally, catalyzes the condensation of the acetyl group of acetyl-CoA with 3-methyl-2-oxobutanoate (2-ketoisovalerate) to form 3-carboxy-3-hydroxy-4-methylpentanoate (2-isopropylmalate). The protein is 2-isopropylmalate synthase of Bifidobacterium longum subsp. infantis (strain ATCC 15697 / DSM 20088 / JCM 1222 / NCTC 11817 / S12).